The sequence spans 245 residues: AA9 family lytic polysaccharide monooxygenase B (245 aa).

A signal peptide spans 1–18 (MKSAIFAAAVLGAAGVSA). Cu(2+)-binding residues include H19 and H105. A disulfide bridge connects residues C116 and C120. O2 is bound by residues H179 and Q188. Y190 is a binding site for Cu(2+).

This sequence belongs to the polysaccharide monooxygenase AA9 family. Cu(2+) is required as a cofactor.

It is found in the secreted. It catalyses the reaction [(1-&gt;4)-beta-D-glucosyl]n+m + reduced acceptor + O2 = 4-dehydro-beta-D-glucosyl-[(1-&gt;4)-beta-D-glucosyl]n-1 + [(1-&gt;4)-beta-D-glucosyl]m + acceptor + H2O.. Its function is as follows. Lytic polysaccharide monooxygenase (LPMO) that depolymerizes crystalline and amorphous polysaccharides via the oxidation of scissile alpha- or beta-(1-4)-glycosidic bonds, yielding C1 or C4 oxidation products. Catalysis by LPMOs requires the reduction of the active-site copper from Cu(II) to Cu(I) by a reducing agent and H(2)O(2) or O(2) as a cosubstrate. Active on hemicelluloses, including xylan, glucomannan, and xyloglucan. Has no activity on ivory nut mannan (INM), a linear beta-1,4-linked mannan without substitutions. This chain is AA9 family lytic polysaccharide monooxygenase B, found in Malbranchea cinnamomea (Thermophilic fungus).